The chain runs to 380 residues: 1-deoxy-D-xylulose 5-phosphate reductoisomerase (380 aa).

Residues T10, G11, S12, I13, G36, R37, N38, and N120 each contribute to the NADPH site. K121 is a 1-deoxy-D-xylulose 5-phosphate binding site. An NADPH-binding site is contributed by E122. Position 146 (D146) interacts with Mn(2+). 1-deoxy-D-xylulose 5-phosphate contacts are provided by S147, E148, S172, and H195. A Mn(2+)-binding site is contributed by E148. Position 201 (G201) interacts with NADPH. The 1-deoxy-D-xylulose 5-phosphate site is built by S208, N213, K214, and E217. E217 contacts Mn(2+).

Belongs to the DXR family. The cofactor is Mg(2+). Requires Mn(2+) as cofactor.

The catalysed reaction is 2-C-methyl-D-erythritol 4-phosphate + NADP(+) = 1-deoxy-D-xylulose 5-phosphate + NADPH + H(+). It functions in the pathway isoprenoid biosynthesis; isopentenyl diphosphate biosynthesis via DXP pathway; isopentenyl diphosphate from 1-deoxy-D-xylulose 5-phosphate: step 1/6. Catalyzes the NADPH-dependent rearrangement and reduction of 1-deoxy-D-xylulose-5-phosphate (DXP) to 2-C-methyl-D-erythritol 4-phosphate (MEP). In Listeria monocytogenes serotype 4b (strain F2365), this protein is 1-deoxy-D-xylulose 5-phosphate reductoisomerase.